The following is a 249-amino-acid chain: MANDPIHQFQVSRWIPIDVGGVDLSFTNVSAFMVATVVVASGFLYLTSSGRGLIPTRLQSVSEMAYEFVATSLRDSAGSKGMKFFPFVFSLFMFVLVANFLGLFPYFYTVTSQIIVTFALAVLVIGTVIVYGFFKHGLGFLKLFVPSGVPGIIVPLVVAIEIISFLSRPISLSVRLFANMLAGHITLKVFAGFVVSLAALGPIGIGGAVLPLIMTVAITALEFLVAFLQAYVFTVLTCMYINDAVHPGH.

6 helical membrane passes run 26 to 46 (FTNV…FLYL), 84 to 104 (FFPF…LGLF), 114 to 134 (IIVT…YGFF), 143 to 163 (LFVP…IEII), 193 to 213 (FVVS…LPLI), and 216 to 236 (VAIT…FTVL).

This sequence belongs to the ATPase A chain family. In terms of assembly, F-type ATPases have 2 components, CF(1) - the catalytic core - and CF(0) - the membrane proton channel. CF(1) has five subunits: alpha(3), beta(3), gamma(1), delta(1), epsilon(1). CF(0) has three main subunits: a(1), b(2) and c(9-12). The alpha and beta chains form an alternating ring which encloses part of the gamma chain. CF(1) is attached to CF(0) by a central stalk formed by the gamma and epsilon chains, while a peripheral stalk is formed by the delta and b chains.

Its subcellular location is the cell inner membrane. In terms of biological role, key component of the proton channel; it plays a direct role in the translocation of protons across the membrane. This chain is ATP synthase subunit a 1, found in Brucella anthropi (strain ATCC 49188 / DSM 6882 / CCUG 24695 / JCM 21032 / LMG 3331 / NBRC 15819 / NCTC 12168 / Alc 37) (Ochrobactrum anthropi).